A 444-amino-acid chain; its full sequence is Ribulose bisphosphate carboxylase (444 aa).

The active-site Proton acceptor is the Lys-163. Lys-165 is a binding site for substrate. Lys-189, Asp-191, and Glu-192 together coordinate Mg(2+). Position 189 is an N6-carboxylysine (Lys-189). Residue His-281 is the Proton acceptor of the active site. Residues Arg-282, His-314, 367–369 (SGG), and 389–392 (QLGG) each bind substrate.

The protein belongs to the RuBisCO large chain family. Type III subfamily. Homodecamer, consisting of five dimer units which form a ring-like pentagonal structure. This arrangement is essential for its high thermostability. In contrast to form I RuBisCO, the form III RuBisCO is composed solely of large subunits. Mg(2+) is required as a cofactor.

The enzyme catalyses 2 (2R)-3-phosphoglycerate + 2 H(+) = D-ribulose 1,5-bisphosphate + CO2 + H2O. It carries out the reaction D-ribulose 1,5-bisphosphate + O2 = 2-phosphoglycolate + (2R)-3-phosphoglycerate + 2 H(+). In terms of biological role, catalyzes the addition of molecular CO(2) and H(2)O to ribulose 1,5-bisphosphate (RuBP), generating two molecules of 3-phosphoglycerate (3-PGA). Functions in an archaeal AMP degradation pathway, together with AMP phosphorylase and R15P isomerase. This is Ribulose bisphosphate carboxylase from Thermococcus kodakarensis (strain ATCC BAA-918 / JCM 12380 / KOD1) (Pyrococcus kodakaraensis (strain KOD1)).